The sequence spans 283 residues: Peroxisomal protein 2 (283 aa).

The short motif at 281 to 283 (VKL) is the Peroxisomal target signal 1 (PTS1) element.

It belongs to the PXP2 family.

The protein localises to the peroxisome matrix. Its subcellular location is the cytoplasm. It is found in the cytosol. Its function is as follows. Probably involved in peroxisome formation or maintenance as well as in amino acid metabolism. This Saccharomyces cerevisiae (strain ATCC 204508 / S288c) (Baker's yeast) protein is Peroxisomal protein 2.